The sequence spans 188 residues: Peptidyl-tRNA hydrolase (188 aa).

Phe15 provides a ligand contact to tRNA. His20 acts as the Proton acceptor in catalysis. Tyr64, Asn66, and Asn112 together coordinate tRNA.

Belongs to the PTH family. In terms of assembly, monomer.

The protein resides in the cytoplasm. The catalysed reaction is an N-acyl-L-alpha-aminoacyl-tRNA + H2O = an N-acyl-L-amino acid + a tRNA + H(+). In terms of biological role, hydrolyzes ribosome-free peptidyl-tRNAs (with 1 or more amino acids incorporated), which drop off the ribosome during protein synthesis, or as a result of ribosome stalling. Catalyzes the release of premature peptidyl moieties from peptidyl-tRNA molecules trapped in stalled 50S ribosomal subunits, and thus maintains levels of free tRNAs and 50S ribosomes. In Borrelia recurrentis (strain A1), this protein is Peptidyl-tRNA hydrolase.